The following is a 550-amino-acid chain: Hydroxylamine reductase (550 aa).

Residues cysteine 3, cysteine 6, cysteine 18, and cysteine 25 each contribute to the [2Fe-2S] cluster site. 8 residues coordinate hybrid [4Fe-2O-2S] cluster: histidine 249, glutamate 273, cysteine 317, cysteine 405, cysteine 433, cysteine 458, glutamate 492, and lysine 494. Position 405 is a cysteine persulfide (cysteine 405).

It belongs to the HCP family. It depends on [2Fe-2S] cluster as a cofactor. Hybrid [4Fe-2O-2S] cluster serves as cofactor.

The protein resides in the cytoplasm. The catalysed reaction is A + NH4(+) + H2O = hydroxylamine + AH2 + H(+). Inhibited by oxygen. Activated by cyanide except in the prolonged presence of excess cyanide, where the enzyme is inactivated. Catalyzes the reduction of hydroxylamine to form NH(3) and H(2)O. Is also able to reduce hydroxylamine analogs such as methylhydroxylamine and hydroxyquinone. Might have a role as a scavenger of potentially toxic by-products of nitrate metabolism. The sequence is that of Hydroxylamine reductase from Escherichia coli (strain K12).